The sequence spans 530 residues: Alpha-(1,3)-fucosyltransferase 4 (530 aa).

Disordered regions lie at residues 1-48 and 66-112; these read MRRL…RAVP and HLGG…STPA. Residues 1–147 lie on the Cytoplasmic side of the membrane; it reads MRRLWGAARK…GGRRGWRRGR (147 aa). Basic and acidic residues predominate over residues 88–106; that stretch reads ASGERQRRLEPQLQHESRC. A helical; Signal-anchor for type II membrane protein transmembrane segment spans residues 148-172; that stretch reads GLPWTVCVLAAAGLTCTALITYACW. Over 173 to 530 the chain is Lumenal; that stretch reads GQLPPLPWAS…IRNLASWFER (358 aa). N-linked (GlcNAc...) asparagine glycans are attached at residues Asn216 and Asn315.

Belongs to the glycosyltransferase 10 family. As to expression, expressed at low levels in bone marrow-derived mesenchymal stem cells. In terms of tissue distribution, expressed in cord blood immature promyelocytes and in peripheral blood myeloid and lymphoid cell populations.

The protein resides in the golgi apparatus. Its subcellular location is the golgi stack membrane. It catalyses the reaction a beta-D-galactosyl-(1-&gt;4)-N-acetyl-beta-D-glucosaminyl derivative + GDP-beta-L-fucose = a beta-D-galactosyl-(1-&gt;4)-[alpha-L-fucosyl-(1-&gt;3)]-N-acetyl-beta-D-glucosaminyl derivative + GDP + H(+). The enzyme catalyses an N-acetyl-alpha-neuraminyl-(2-&gt;3)-beta-D-galactosyl-(1-&gt;4)-N-acetyl-beta-D-glucosaminyl derivative + GDP-beta-L-fucose = an alpha-Neu5Ac-(2-&gt;3)-beta-D-Gal-(1-&gt;4)-[alpha-L-Fuc-(1-&gt;3)]-beta-D-GlcNAc derivative + GDP + H(+). The catalysed reaction is an alpha-Neu5Ac-(2-&gt;3)-beta-D-Gal-(1-&gt;4)-beta-D-GlcNAc-(1-&gt;3)-beta-D-Gal-(1-&gt;4)-beta-D-GlcNAc derivative + GDP-beta-L-fucose = an alpha-Neu5Ac-(2-&gt;3)-beta-D-Gal-(1-&gt;4)-beta-D-GlcNAc-(1-&gt;3)-beta-D-Gal-(1-&gt;4)-[alpha-L-Fuc-(1-&gt;3)]-beta-D-GlcNAc derivative + GDP + H(+). It carries out the reaction an alpha-Neu5Ac-(2-&gt;3)-beta-D-Gal-(1-&gt;4)-beta-D-GlcNAc6S derivative + GDP-beta-L-fucose = an alpha-Neu5Ac-(2-&gt;3)-beta-D-Gal-(1-&gt;4)-[alpha-L-Fuc-(1-&gt;3)]-beta-D-GlcNAc6S derivative + GDP + H(+). Its pathway is protein modification; protein glycosylation. In terms of biological role, catalyzes alpha(1-&gt;3) linkage of fucosyl moiety transferred from GDP-beta-L-fucose to N-acetyl glucosamine (GlcNAc) within type 2 lactosamine (LacNAc, Gal-beta(1-&gt;4)GlcNAc) glycan attached to N- or O-linked glycoproteins. Robustly fucosylates nonsialylated distal LacNAc unit of the polylactosamine chain to form Lewis X antigen (CD15), a glycan determinant known to mediate important cellular functions in development and immunity. Fucosylates with lower efficiency sialylated LacNAc acceptors to form sialyl Lewis X and 6-sulfo sialyl Lewis X determinants that serve as recognition epitopes for C-type lectins. Together with FUT7 contributes to SELE, SELL and SELP selectin ligand biosynthesis and selectin-dependent lymphocyte homing, leukocyte migration and blood leukocyte homeostasis. In a cell type specific manner, may also fucosylate the internal LacNAc unit of the polylactosamine chain to form VIM-2 antigen that serves as recognition epitope for SELE. Its function is as follows. Does not generate Lewis X antigens. The sequence is that of Alpha-(1,3)-fucosyltransferase 4 from Homo sapiens (Human).